We begin with the raw amino-acid sequence, 349 residues long: Zinc-type alcohol dehydrogenase-like protein PB24D3.08c (349 aa).

This sequence belongs to the zinc-containing alcohol dehydrogenase family. Quinone oxidoreductase subfamily.

Its subcellular location is the cytoplasm. The protein localises to the nucleus. The sequence is that of Zinc-type alcohol dehydrogenase-like protein PB24D3.08c from Schizosaccharomyces pombe (strain 972 / ATCC 24843) (Fission yeast).